The sequence spans 60 residues: UPF0391 membrane protein CCNA_00709 (60 aa).

2 helical membrane-spanning segments follow: residues 4 to 24 (WAIILAIVALIAGALGFSGLA) and 33 to 53 (ILFFLFLVGFVLVLLLGGTVF).

It belongs to the UPF0391 family.

The protein resides in the cell membrane. This Caulobacter vibrioides (strain NA1000 / CB15N) (Caulobacter crescentus) protein is UPF0391 membrane protein CCNA_00709.